The chain runs to 391 residues: S-adenosylmethionine synthase (391 aa).

An ATP-binding site is contributed by His-14. Residue Asp-16 participates in Mg(2+) binding. Residue Glu-42 coordinates K(+). L-methionine-binding residues include Glu-55 and Gln-98. The segment at 98-108 (QSADIAMGVDE) is flexible loop. ATP-binding positions include 172–174 (DGK), 238–239 (RF), Asp-247, 253–254 (RK), Ala-270, and Lys-274. Asp-247 contacts L-methionine. L-methionine is bound at residue Lys-278.

Belongs to the AdoMet synthase family. In terms of assembly, homotetramer; dimer of dimers. Mg(2+) is required as a cofactor. Requires K(+) as cofactor.

It is found in the cytoplasm. The catalysed reaction is L-methionine + ATP + H2O = S-adenosyl-L-methionine + phosphate + diphosphate. It participates in amino-acid biosynthesis; S-adenosyl-L-methionine biosynthesis; S-adenosyl-L-methionine from L-methionine: step 1/1. In terms of biological role, catalyzes the formation of S-adenosylmethionine (AdoMet) from methionine and ATP. The overall synthetic reaction is composed of two sequential steps, AdoMet formation and the subsequent tripolyphosphate hydrolysis which occurs prior to release of AdoMet from the enzyme. In Clostridium botulinum (strain Alaska E43 / Type E3), this protein is S-adenosylmethionine synthase.